Reading from the N-terminus, the 872-residue chain is Homeobox-leucine zipper protein ROC6 (872 aa).

2 disordered regions span residues 28-53 (VHNSRLLPTPPVPKPGGGFAAPGLSL) and 67-130 (NRSL…HRHT). A compositionally biased stretch (gly residues) spans 74–85 (GNGGSGSGGDGD). Over residues 86-99 (SLGRGREEENDSRS) the composition is skewed to basic and acidic residues. A compositionally biased stretch (basic residues) spans 119 to 130 (PRKKKKRYHRHT). A DNA-binding region (homeobox) is located at residues 122 to 181 (KKKRYHRHTPQQIQELEAVFKECPHPDEKQRMELSRRLNLESRQVKFWFQNRRTQMKQTQ). Residues 176-248 (QMKQTQIERH…LKDELDRVCA (73 aa)) adopt a coiled-coil conformation. The START domain occupies 340–583 (GAIDRAVLLE…LQRQCQYLAI (244 aa)). The interval 792–818 (HNNGASPSPAEVGSGASPNSAAGGGGG) is disordered.

It belongs to the HD-ZIP homeobox family. Class IV subfamily.

The protein resides in the nucleus. In terms of biological role, probable transcription factor. The sequence is that of Homeobox-leucine zipper protein ROC6 (ROC6) from Oryza sativa subsp. japonica (Rice).